The following is a 339-amino-acid chain: DNA-directed RNA polymerase subunit alpha (339 aa).

The tract at residues 1 to 235 (MVIQKNWQEL…DQLQIFVNFE (235 aa)) is alpha N-terminal domain (alpha-NTD). The alpha C-terminal domain (alpha-CTD) stretch occupies residues 251 to 339 (FNPALLKKVD…DLAKRFEEHY (89 aa)).

Belongs to the RNA polymerase alpha chain family. In terms of assembly, homodimer. The RNAP catalytic core consists of 2 alpha, 1 beta, 1 beta' and 1 omega subunit. When a sigma factor is associated with the core the holoenzyme is formed, which can initiate transcription.

The catalysed reaction is RNA(n) + a ribonucleoside 5'-triphosphate = RNA(n+1) + diphosphate. Its function is as follows. DNA-dependent RNA polymerase catalyzes the transcription of DNA into RNA using the four ribonucleoside triphosphates as substrates. The sequence is that of DNA-directed RNA polymerase subunit alpha from Methylobacterium nodulans (strain LMG 21967 / CNCM I-2342 / ORS 2060).